The primary structure comprises 454 residues: Notoamide E oxidase notB (454 aa).

Residues 15–35 (SPAELTVIIVGLGIAGLTAAI) form a helical membrane-spanning segment. FAD-binding residues include Glu48 and Gly61. A glycan (N-linked (GlcNAc...) asparagine) is linked at Asn75. Position 121 (Arg121) interacts with FAD. Catalysis depends on residues Arg199 and Tyr229. FAD contacts are provided by Asp322 and Gly335.

This sequence belongs to the paxM FAD-dependent monooxygenase family. It depends on FAD as a cofactor.

It localises to the membrane. It carries out the reaction notoamide E + NADPH + O2 + H(+) = notoamide C + NADP(+) + H2O. The catalysed reaction is notoamide E + NADPH + O2 + H(+) = notoamide D + NADP(+) + H2O. The protein operates within alkaloid biosynthesis. Functionally, FAD-dependent monooxygenase; part of the gene cluster that mediates the biosynthesis of notoamide, a fungal indole alkaloid that belongs to a family of natural products containing a characteristic bicyclo[2.2.2]diazaoctane core. The first step of notoamide biosynthesis involves coupling of L-proline and L-tryptophan by the bimodular NRPS notE, to produce cyclo-L-tryptophan-L-proline called brevianamide F. The reverse prenyltransferase notF then acts as a deoxybrevianamide E synthase and converts brevianamide F to deoxybrevianamide E via reverse prenylation at C-2 of the indole ring leading to the bicyclo[2.2.2]diazaoctane core. Deoxybrevianamide E is further hydroxylated at C-6 of the indole ring, likely catalyzed by the cytochrome P450 monooxygenase notG, to yield 6-hydroxy-deoxybrevianamide E. 6-hydroxy-deoxybrevianamide E is a specific substrate of the prenyltransferase notC for normal prenylation at C-7 to produce 6-hydroxy-7-prenyl-deoxybrevianamide, also called notoamide S. As the proposed pivotal branching point in notoamide biosynthesis, notoamide S can be diverted to notoamide E through an oxidative pyran ring closure putatively catalyzed by either notH cytochrome P450 monooxygenase or the notD FAD-linked oxidoreductase. This step would be followed by an indole 2,3-epoxidation-initiated pinacol-like rearrangement catalyzed by the notB FAD-dependent monooxygenase leading to the formation of notoamide C and notoamide D. On the other hand notoamide S is converted to notoamide T by notH (or notD), a bifunctional oxidase that also functions as the intramolecular Diels-Alderase responsible for generation of (+)-notoamide T. To generate antipodal (-)-notoaminide T, notH' (or notD') in Aspergillus versicolor is expected to catalyze a Diels-Alder reaction leading to the opposite stereochemistry. The remaining oxidoreductase notD (or notH) likely catalyzes the oxidative pyran ring formation to yield (+)-stephacidin A. The FAD-dependent monooxygenase notI is highly similar to notB and is predicted to catalyze a similar conversion from (+)-stephacidin A to (-)-notoamide B via the 2,3-epoxidation of (+)-stephacidin A followed by a pinacol-type rearrangement. Finally, it remains unclear which enzyme could be responsible for the final hydroxylation steps leading to notoamide A and sclerotiamide. This is Notoamide E oxidase notB from Aspergillus sp. (strain MF297-2).